We begin with the raw amino-acid sequence, 228 residues long: Large ribosomal subunit protein uL3 (228 aa).

The tract at residues 135–159 (MKSQRASHGNSRSHNVPGSIGMAQD) is disordered. Positions 140–150 (ASHGNSRSHNV) are enriched in polar residues. Glutamine 158 bears the N5-methylglutamine mark.

This sequence belongs to the universal ribosomal protein uL3 family. In terms of assembly, part of the 50S ribosomal subunit. Forms a cluster with proteins L14 and L19. Methylated by PrmB.

Functionally, one of the primary rRNA binding proteins, it binds directly near the 3'-end of the 23S rRNA, where it nucleates assembly of the 50S subunit. This Albidiferax ferrireducens (strain ATCC BAA-621 / DSM 15236 / T118) (Rhodoferax ferrireducens) protein is Large ribosomal subunit protein uL3.